We begin with the raw amino-acid sequence, 491 residues long: Cytochrome P450 monooxygenase 521A1 (491 aa).

The chain crosses the membrane as a helical span at residues 1–21; it reads MILLTLLYLIIFYIIIDFIKK. Residue Cys438 coordinates heme.

The protein belongs to the cytochrome P450 family. It depends on heme as a cofactor.

Its subcellular location is the membrane. The catalysed reaction is discoidol + reduced [NADPH--hemoprotein reductase] + O2 = discodiene + acetone + oxidized [NADPH--hemoprotein reductase] + 2 H2O + H(+). Its pathway is sesquiterpene biosynthesis. Its function is as follows. Cytochrome P450 monooxygenase; part of the gene cluster that mediates the biosynthesis of the trisnorsesquiterpene discodiene which has a function during later stages of multicellular development, during the transition from fingers to Mexican hats. The terpene synthase tps8 converts its substrate farnesyl diphosphate (FDP) into the bicyclic sesquiterpene alcohol discoidol. The cytochrome P450 monooxygenase cyp521A1 then catalyzes the oxidative degradation of discoidol to form the trisnorsesquiterpene discodiene. In Dictyostelium discoideum (Social amoeba), this protein is Cytochrome P450 monooxygenase 521A1 (cyp521A1).